The chain runs to 312 residues: Isoflavone reductase homolog (312 aa).

NADP(+)-binding positions include 10-16, Arg35, and Lys44; that span reads GGTGYVG. Catalysis depends on Lys138, which acts as the Proton acceptor. Residue Arg142 coordinates NADP(+). His270 contacts substrate.

Belongs to the NmrA-type oxidoreductase family. Isoflavone reductase subfamily.

The sequence is that of Isoflavone reductase homolog from Lupinus albus (White lupine).